Reading from the N-terminus, the 312-residue chain is Short chain dehydrogenase pgmD (312 aa).

The NADP(+) site is built by V46, I47, K171, Y207, K211, and T242. Catalysis depends on Y207, which acts as the Proton donor. The active-site Lowers pKa of active site Tyr is K211.

It belongs to the short-chain dehydrogenases/reductases (SDR) family.

Its pathway is pigment biosynthesis. It participates in secondary metabolite biosynthesis. Its function is as follows. Short chain dehydrogenase; part of the gene cluster that mediates the biosynthesis of pleosporalin A, ascomycone A, as well as a third cryptic naphthoquinone derived pigment, all responsible for the coloration of conidia. Essential for the production of pleosporalin A, but not the 2 other final products. The pathway begins with the biosynthesis of the cyclized heptaketide 3-acetonyl-1,6,8-trihydroxy-2-naphthaldehyde by the NR-PKS pgmA. The C-6 hydroxyl group is further methylated by the O-methyltransferase pgmB to yield fusarubinaldehyde which is in turn oxidized by the cytochrome P450 monooxygenase pgmC at C-9. The C-1 hydroxyl group is then methylated spontaneously. Although pgmE, pgmD and pgmH are essential for the production of pleosporalin A, it is not the case for the 2 other final products and it remains difficult to assign a specific function to each enzyme. PgmF and pgmG seem not to be involved in pigment biosynthesis although they were regulated by the cluster-specific transcription factor pgmR. The sequence is that of Short chain dehydrogenase pgmD from Aspergillus terreus (strain NIH 2624 / FGSC A1156).